A 150-amino-acid chain; its full sequence is Small ribosomal subunit protein eS19 (150 aa).

It belongs to the eukaryotic ribosomal protein eS19 family. In terms of assembly, part of the 30S ribosomal subunit.

Its function is as follows. May be involved in maturation of the 30S ribosomal subunit. This Thermoplasma acidophilum (strain ATCC 25905 / DSM 1728 / JCM 9062 / NBRC 15155 / AMRC-C165) protein is Small ribosomal subunit protein eS19.